The primary structure comprises 227 residues: MPEINTDHLDKQQVQLLAEMCILIDENDNKIGAETKKNCHLNENIEKGLLHRAFSVFLFNTENKLLLQQRSDAKITFPGCFTNTCCSHPLSNPGELEENDALGVRRAAQRRLKAELGIPLEEVPPEEINYLTRIHYKAQSDGIWGEHEIDYILFVRKNVTLNPDPNEIKSFCYVSKEELKELLKKAANGEIKITPWFQIIAETFLFKWWDNLNHLNQFVDHEKIHRM.

K36 is a substrate binding site. Positions 40 and 51 each coordinate Mg(2+). The 151-residue stretch at 49–199 folds into the Nudix hydrolase domain; it reads LLHRAFSVFL…EIKITPWFQI (151 aa). Residues R70 and K74 each contribute to the substrate site. Residue C86 is part of the active site. S87 serves as a coordination point for substrate. Positions 146 and 148 each coordinate Mg(2+). E148 is an active-site residue. K176 carries the post-translational modification N6-acetyllysine. The Microbody targeting signal motif lies at 225–227; the sequence is HRM.

It belongs to the IPP isomerase type 1 family. As to quaternary structure, monomer. The cofactor is Mg(2+).

It is found in the peroxisome. It catalyses the reaction isopentenyl diphosphate = dimethylallyl diphosphate. Its pathway is isoprenoid biosynthesis; dimethylallyl diphosphate biosynthesis; dimethylallyl diphosphate from isopentenyl diphosphate: step 1/1. In terms of biological role, catalyzes the 1,3-allylic rearrangement of the homoallylic substrate isopentenyl (IPP) to its highly electrophilic allylic isomer, dimethylallyl diphosphate (DMAPP). The polypeptide is Isopentenyl-diphosphate Delta-isomerase 1 (IDI1) (Macaca fascicularis (Crab-eating macaque)).